Reading from the N-terminus, the 1486-residue chain is Alsin homolog (1486 aa).

RCC1 repeat units lie at residues 147-201 (QGVV…MLVA), 256-307 (HTQL…ARTL), and 308-363 (DGRL…LLNA). MORN repeat units follow at residues 744 to 765 (CGTW…DGSV), 766 to 784 (YCGE…MVIP), 789 to 804 (YVGN…HGVY), 817 to 832 (YEGN…HGVM), 839 to 853 (YVGE…GYGV), and 863 to 884 (YMGM…NRGD). Positions 1333 to 1486 (SRKDEMYRQN…VTSRALQKIP (154 aa)) constitute a VPS9 domain.

In the embryo, expressed in a wide range of tissues including the epidermis and the ventral nerve cord.

In terms of biological role, has guanine nucleotide exchange factor (GEF) activity towards Rab5. Promotes the exchange of GDP to GTP, converting inactive GDP-bound Rab5 into its active GTP-bound form. This chain is Alsin homolog, found in Drosophila melanogaster (Fruit fly).